We begin with the raw amino-acid sequence, 1072 residues long: Carbamoyl phosphate synthase large chain (1072 aa).

The carboxyphosphate synthetic domain stretch occupies residues 1–401; it reads MPKYKDINKV…SLLKAVRSLE (401 aa). Residues Arg129, Arg169, Gly175, Gly176, Lys208, Leu210, Glu215, Gly241, Val242, His243, Gln284, and Glu298 each coordinate ATP. The ATP-grasp 1 domain occupies 133–327; that stretch reads KRKMQEIGEP…IAKIAAKIAI (195 aa). Residues Gln284, Glu298, and Asn300 each coordinate Mg(2+). 3 residues coordinate Mn(2+): Gln284, Glu298, and Asn300. An oligomerization domain region spans residues 402–544; the sequence is IKAYGLRLNN…YIYSTYGEED (143 aa). Residues 545–929 form a carbamoyl phosphate synthetic domain region; it reads EVEIHDMPKV…ALYKALEGAG (385 aa). The ATP-grasp 2 domain occupies 671–861; the sequence is SKLLRELNIN…MVKLAVEVAL (191 aa). The ATP site is built by Arg707, Lys746, Ile748, Glu752, Gly777, Val778, His779, Ser780, Gln820, and Glu832. Gln820, Glu832, and Asn834 together coordinate Mg(2+). Positions 820, 832, and 834 each coordinate Mn(2+). The region spanning 930–1072 is the MGS-like domain; the sequence is LKIPKKGKIL…QKDNVKNLVL (143 aa). Residues 930 to 1072 form an allosteric domain region; that stretch reads LKIPKKGKIL…QKDNVKNLVL (143 aa).

Belongs to the CarB family. As to quaternary structure, composed of two chains; the small (or glutamine) chain promotes the hydrolysis of glutamine to ammonia, which is used by the large (or ammonia) chain to synthesize carbamoyl phosphate. Tetramer of heterodimers (alpha,beta)4. It depends on Mg(2+) as a cofactor. The cofactor is Mn(2+).

It catalyses the reaction hydrogencarbonate + L-glutamine + 2 ATP + H2O = carbamoyl phosphate + L-glutamate + 2 ADP + phosphate + 2 H(+). It carries out the reaction hydrogencarbonate + NH4(+) + 2 ATP = carbamoyl phosphate + 2 ADP + phosphate + 2 H(+). It participates in amino-acid biosynthesis; L-arginine biosynthesis; carbamoyl phosphate from bicarbonate: step 1/1. The protein operates within pyrimidine metabolism; UMP biosynthesis via de novo pathway; (S)-dihydroorotate from bicarbonate: step 1/3. Functionally, large subunit of the glutamine-dependent carbamoyl phosphate synthetase (CPSase). CPSase catalyzes the formation of carbamoyl phosphate from the ammonia moiety of glutamine, carbonate, and phosphate donated by ATP, constituting the first step of 2 biosynthetic pathways, one leading to arginine and/or urea and the other to pyrimidine nucleotides. The large subunit (synthetase) binds the substrates ammonia (free or transferred from glutamine from the small subunit), hydrogencarbonate and ATP and carries out an ATP-coupled ligase reaction, activating hydrogencarbonate by forming carboxy phosphate which reacts with ammonia to form carbamoyl phosphate. The sequence is that of Carbamoyl phosphate synthase large chain from Thermoanaerobacter pseudethanolicus (strain ATCC 33223 / 39E) (Clostridium thermohydrosulfuricum).